The sequence spans 92 residues: MDAMPLSDISALGYEEARDELVRVVTELEQGSATLEESLALWERGEALARRCEEWLIGAKARLDAARAGAAESAGTAKSAVAADSRGAADSA.

The span at 71–84 (AESAGTAKSAVAAD) shows a compositional bias: low complexity. The tract at residues 71–92 (AESAGTAKSAVAADSRGAADSA) is disordered.

This sequence belongs to the XseB family. As to quaternary structure, heterooligomer composed of large and small subunits.

It localises to the cytoplasm. It carries out the reaction Exonucleolytic cleavage in either 5'- to 3'- or 3'- to 5'-direction to yield nucleoside 5'-phosphates.. In terms of biological role, bidirectionally degrades single-stranded DNA into large acid-insoluble oligonucleotides, which are then degraded further into small acid-soluble oligonucleotides. This chain is Exodeoxyribonuclease 7 small subunit, found in Leifsonia xyli subsp. xyli (strain CTCB07).